A 264-amino-acid polypeptide reads, in one-letter code: DNA repair protein RecO (264 aa).

Belongs to the RecO family.

Its function is as follows. Involved in DNA repair and RecF pathway recombination. This chain is DNA repair protein RecO, found in Leuconostoc citreum (strain KM20).